The sequence spans 312 residues: Ornithine carbamoyltransferase (312 aa).

Carbamoyl phosphate-binding positions include 59-62, Gln86, Arg110, and 137-140; these read STRT and HPCQ. L-ornithine is bound by residues Asn167, Asp231, and 235–236; that span reads SM. Cys271 and Arg299 together coordinate carbamoyl phosphate.

Belongs to the aspartate/ornithine carbamoyltransferase superfamily. OTCase family.

It localises to the cytoplasm. It carries out the reaction carbamoyl phosphate + L-ornithine = L-citrulline + phosphate + H(+). It functions in the pathway amino-acid biosynthesis; L-arginine biosynthesis; L-arginine from L-ornithine and carbamoyl phosphate: step 1/3. In terms of biological role, reversibly catalyzes the transfer of the carbamoyl group from carbamoyl phosphate (CP) to the N(epsilon) atom of ornithine (ORN) to produce L-citrulline. The polypeptide is Ornithine carbamoyltransferase (Methanopyrus kandleri (strain AV19 / DSM 6324 / JCM 9639 / NBRC 100938)).